The following is an 84-amino-acid chain: U4-theraphotoxin-Hhn1b (84 aa).

The first 22 residues, 1 to 22 (MKVTLTAILTCAAVLVLHTTAA), serve as a signal peptide directing secretion. A propeptide spanning residues 23–47 (EELEESQLMEVGMPDTELAAVDEER) is cleaved from the precursor. 3 disulfides stabilise this stretch: C51–C65, C55–C76, and C70–C81.

The protein belongs to the neurotoxin 12 (Hwtx-2) family. 02 (Hwtx-2) subfamily. Expressed by the venom gland.

It is found in the secreted. Its function is as follows. Postsynaptic neurotoxin. The chain is U4-theraphotoxin-Hhn1b from Cyriopagopus hainanus (Chinese bird spider).